Consider the following 187-residue polypeptide: GTP cyclohydrolase 1 (187 aa).

Residues cysteine 76, histidine 79, and cysteine 148 each coordinate Zn(2+).

This sequence belongs to the GTP cyclohydrolase I family. As to quaternary structure, toroid-shaped homodecamer, composed of two pentamers of five dimers.

The enzyme catalyses GTP + H2O = 7,8-dihydroneopterin 3'-triphosphate + formate + H(+). It functions in the pathway cofactor biosynthesis; 7,8-dihydroneopterin triphosphate biosynthesis; 7,8-dihydroneopterin triphosphate from GTP: step 1/1. This Streptococcus suis (strain 98HAH33) protein is GTP cyclohydrolase 1.